The following is a 136-amino-acid chain: Probable flagellum biosynthesis repressor protein FlbT 2 (136 aa).

Belongs to the FlbT family.

Has a post-transcriptional repressor function in flagellum biogenesis. Associates with the 5'-UTR of fljK mRNA and promotes its degradation. This chain is Probable flagellum biosynthesis repressor protein FlbT 2, found in Bradyrhizobium diazoefficiens (strain JCM 10833 / BCRC 13528 / IAM 13628 / NBRC 14792 / USDA 110).